The following is a 763-amino-acid chain: Formin-like protein 4 (763 aa).

The first 33 residues, 1 to 33 (MAAMLMQPWPPFLPHLTLVFLTLILFFPNQSFS), serve as a signal peptide directing secretion. Residues 52–73 (PPVQSPVLSPPQNPSSSSSDSD) form a disordered region. The chain crosses the membrane as a helical span at residues 80–100 (AVLITAASTLLVAAVFFFLVH). Disordered regions lie at residues 185 to 327 (IYSK…DSDH) and 726 to 763 (RSSM…DSDM). A compositionally biased stretch (polar residues) spans 205–225 (RSSTSHSVIHNDNYRNATTTH). A compositionally biased stretch (basic and acidic residues) spans 229 to 238 (VKTDSFEFVK). Positions 240–280 (DPTPPPPPPPPIPVKQSATPPPPPPPKLKNNGPSPPPPPPL) are enriched in pro residues. A compositionally biased stretch (low complexity) spans 281–292 (KKTAALSSSASK). Residues 303 to 738 (SGESSNGQVK…MGSTQQRNAV (436 aa)) form the FH2 domain. Residues 316-327 (LHWDKVNPDSDH) show a composition bias toward basic and acidic residues. A compositionally biased stretch (polar residues) spans 726 to 736 (RSSMGSTQQRN).

This sequence belongs to the formin-like family. Class-I subfamily. As to quaternary structure, interacts with profilin. In terms of tissue distribution, expressed in the whole plant (at protein level).

The protein resides in the cell membrane. Might be involved in the organization and polarity of the actin cytoskeleton. This Arabidopsis thaliana (Mouse-ear cress) protein is Formin-like protein 4 (FH4).